The primary structure comprises 636 residues: MIIMMNCFPCFTSQKSRNAPCTTNETNDDNVEHDEFRPPVVATTKRTEEREPAEQQPPVKTFNFRELATATKNFRQECLLGEGGFGRVYKGTLQSTGQLVAVKQLDKHGLHGNKEFLAEVLSLAKLEHPNLVKLIGYCADGDQRLLVFEYVSGGSLQDHLYEQKPGQKPMDWITRMKIAFGAAQGLDYLHDKVTPAVIYRDLKASNILLDAEFYPKLCDFGLHNLEPGTGDSLFLSSRVMDTYGYSAPEYTRGDDLTVKSDVYSFGVVLLELITGRRAIDTTKPNDEQNLVAWAQPIFKDPKRYPDMADPLLRKNFSERGLNQAVAITSMCLQEEPTARPLISDVMVALSFLSMSTEDGIPATVPMESFRDKSMSIALSRHGSCSVTPFCISRKDVGNKSSSSSDSEDEEEEKEQKAEKEEESTSKKRQEQEETATDSDDESDSNSEKDQEEEQSQLEKARESSSSSSDSGSERRSIDETNATAQSLKISYSNYSSEEEDNEKLSSKSSCKSNEESTFSRYDSGRDHDDSSRNTSMRINSLAHDDKEEDEEENHETRSYSDHDDSPRNTSMRINSLSHDDDEEEEEENHQTRLEHIHSSKSEDQSVYSDDDAGESGESSLHRIEAKEEEHISSDHD.

Residues 18–57 (NAPCTTNETNDDNVEHDEFRPPVVATTKRTEEREPAEQQP) form a disordered region. Positions 74 to 352 (FRQECLLGEG…SDVMVALSFL (279 aa)) constitute a Protein kinase domain. ATP-binding positions include 80 to 88 (LGEGGFGRV) and lysine 103. The active-site Proton acceptor is aspartate 201. A phosphoserine mark is found at serine 205 and serine 236. Position 242 is a phosphothreonine (threonine 242). Tyrosine 250 bears the Phosphotyrosine mark. A disordered region spans residues 389-636 (FCISRKDVGN…EEEHISSDHD (248 aa)). Residues 403–434 (SSDSEDEEEEKEQKAEKEEESTSKKRQEQEET) adopt a coiled-coil conformation. Residues 413-431 (KEQKAEKEEESTSKKRQEQ) are compositionally biased toward basic and acidic residues. The segment covering 432-455 (EETATDSDDESDSNSEKDQEEEQS) has biased composition (acidic residues). The span at 480–489 (TNATAQSLKI) shows a compositional bias: polar residues. 2 stretches are compositionally biased toward basic and acidic residues: residues 522–531 (DSGRDHDDSS) and 554–566 (HETR…DDSP). Positions 567 to 576 (RNTSMRINSL) are enriched in polar residues. Composition is skewed to basic and acidic residues over residues 588–603 (NHQT…KSED) and 619–636 (SLHR…SDHD).

The protein belongs to the protein kinase superfamily. Ser/Thr protein kinase family. Interacts with PRK6. Post-translationally, palmitoylated. Expressed in mature pollen and in germinating pollen tubes.

The protein localises to the cell membrane. The protein resides in the cytoplasm. Involved in pollen tube guidance into micropyle. Participates in perception of the ovule-secreted peptide signal LURE1. In Arabidopsis thaliana (Mouse-ear cress), this protein is Receptor-like kinase LIP1.